The primary structure comprises 268 residues: Tryptophan synthase alpha chain (268 aa).

Active-site proton acceptor residues include Glu49 and Asp60.

This sequence belongs to the TrpA family. In terms of assembly, tetramer of two alpha and two beta chains.

It catalyses the reaction (1S,2R)-1-C-(indol-3-yl)glycerol 3-phosphate + L-serine = D-glyceraldehyde 3-phosphate + L-tryptophan + H2O. It functions in the pathway amino-acid biosynthesis; L-tryptophan biosynthesis; L-tryptophan from chorismate: step 5/5. Its function is as follows. The alpha subunit is responsible for the aldol cleavage of indoleglycerol phosphate to indole and glyceraldehyde 3-phosphate. The protein is Tryptophan synthase alpha chain of Pseudomonas aeruginosa (strain LESB58).